Consider the following 448-residue polypeptide: MSDLIQPKVLKGFRDFLPADEIERALLMERLVKVFRDYGFVPIDTPALEYSEILLRKSGGETEKQVFRFSDNGGRDVAMRFDLTVPLARFVAEHKSEIYFPFKRYHLGKVWRGEKPQAGRYREFLQCDFDTLGSDSAAVDFEILRLIKKALNELGVSNFKIHVSHRGIFNRFLKSLNLSEDSEEVLRIVDKLAKIGEDEVLKLLTDISSEESAKKILAYISGVSKELKSEDFEKTLSHLENLAGGPDEDTKRMRDIYALVKAVGIEDSIVFDPSITRGLDYYTGVVFETFLNDLPSIGSVCSGGRYDNLTALYMKECITGVGASIGLDRLLAALELLGHQKTKASFTDLLIFSLPEDDLVLSYKIVNFFEAEKINAEVYPEPKKMNHQYTYAEKKDIRWGLFLDKDSCVEEFDKAPQRFKIKLKDMTNRTEDETPLSEAVKKIRASKN.

The protein belongs to the class-II aminoacyl-tRNA synthetase family. As to quaternary structure, homodimer.

The protein localises to the cytoplasm. The enzyme catalyses tRNA(His) + L-histidine + ATP = L-histidyl-tRNA(His) + AMP + diphosphate + H(+). This chain is Histidine--tRNA ligase, found in Treponema denticola (strain ATCC 35405 / DSM 14222 / CIP 103919 / JCM 8153 / KCTC 15104).